Reading from the N-terminus, the 737-residue chain is SANT and BTB domain regulator of class switch recombination (737 aa).

The 39-residue stretch at 21–59 (DMILYPLIGIPQTINWETVARLVPGLTPKECVKRFDELK) folds into the SANT domain. The BTB domain occupies 147 to 255 (MVIHVCDEAK…QCIQYCHKNM (109 aa)). Positions 555-576 (SEEEEYTTGSEVTEDEVGDEEE) are enriched in acidic residues. Positions 555–618 (SEEEEYTTGS…TLEKSTSRDV (64 aa)) are disordered. Residues 580 to 595 (KQRKKEKPKKFTKPPK) are compositionally biased toward basic residues. Residues 604–615 (QKKEKTLEKSTS) are compositionally biased toward basic and acidic residues.

The protein belongs to the KIAA1841 family. In terms of assembly, homodimer. Interacts (via the BTB domain) with HDAC1 and NCOR2.

Negatively regulates class switch recombination or isotype switching in splenic B-cells. In Rattus norvegicus (Rat), this protein is SANT and BTB domain regulator of class switch recombination.